A 146-amino-acid chain; its full sequence is Hemoglobin subunit beta (146 aa).

V1 is subject to N-acetylvaline. A Globin domain is found at 2 to 146; it reads HLSGEEKGAV…VATALAHKYH (145 aa). T12 is modified (phosphothreonine). The residue at position 44 (S44) is a Phosphoserine. K59 is subject to N6-acetyllysine. H63 serves as a coordination point for heme b. The residue at position 82 (K82) is an N6-acetyllysine. H92 lines the heme b pocket. An S-nitrosocysteine modification is found at C93. Position 144 is an N6-acetyllysine (K144).

This sequence belongs to the globin family. In terms of assembly, heterotetramer of two alpha chains and two beta chains. As to expression, red blood cells.

Involved in oxygen transport from the lung to the various peripheral tissues. The protein is Hemoglobin subunit beta (HBB) of Tadarida brasiliensis (Brazilian free-tailed bat).